A 112-amino-acid polypeptide reads, in one-letter code: Cortistatin (112 aa).

A signal peptide spans 1 to 27; it reads MGGCSTRGKRPSALSLLLLLLLSGIAA. The propeptide occupies 28–81; it reads SALPLESGPTGQDSVQDATGGRRTGLLTFLAWWHEWASQDSSSTAFEGGTPELS. A disordered region spans residues 66 to 101; it reads QDSSSTAFEGGTPELSKRQERPPLQQPPHRDKKPCK. C100 and C111 are joined by a disulfide.

Belongs to the somatostatin family. Interneurons in the cerebral cortex and hippocampus.

The protein localises to the secreted. Neuropeptide with neuronal depressant and sleep-modulating properties. This chain is Cortistatin (Cort), found in Rattus norvegicus (Rat).